Consider the following 247-residue polypeptide: Uridylate kinase (247 aa).

Residue 18-21 (KLSG) participates in ATP binding. Glycine 60 lines the UMP pocket. ATP is bound by residues glycine 61 and arginine 65. UMP is bound by residues aspartate 80 and 141–148 (TGNPFFTT). Residues threonine 168, tyrosine 174, and aspartate 177 each coordinate ATP.

This sequence belongs to the UMP kinase family. In terms of assembly, homohexamer.

It is found in the cytoplasm. The enzyme catalyses UMP + ATP = UDP + ADP. The protein operates within pyrimidine metabolism; CTP biosynthesis via de novo pathway; UDP from UMP (UMPK route): step 1/1. Its activity is regulated as follows. Inhibited by UTP. Catalyzes the reversible phosphorylation of UMP to UDP. This Pseudomonas fluorescens (strain ATCC BAA-477 / NRRL B-23932 / Pf-5) protein is Uridylate kinase.